The sequence spans 490 residues: Cobyric acid synthase (490 aa).

Residues Gly251–Phe444 enclose the GATase cobBQ-type domain. Catalysis depends on Cys329, which acts as the Nucleophile. The active site involves His436.

It belongs to the CobB/CobQ family. CobQ subfamily.

It functions in the pathway cofactor biosynthesis; adenosylcobalamin biosynthesis. Functionally, catalyzes amidations at positions B, D, E, and G on adenosylcobyrinic A,C-diamide. NH(2) groups are provided by glutamine, and one molecule of ATP is hydrogenolyzed for each amidation. This chain is Cobyric acid synthase, found in Roseiflexus castenholzii (strain DSM 13941 / HLO8).